The following is a 149-amino-acid chain: Probable flagellum biosynthesis repressor protein FlbT (149 aa).

This sequence belongs to the FlbT family.

Has a post-transcriptional repressor function in flagellum biogenesis. Associates with the 5'-UTR of fljK mRNA and promotes its degradation. The polypeptide is Probable flagellum biosynthesis repressor protein FlbT (Rhizobium etli (strain CIAT 652)).